The following is a 72-amino-acid chain: Prokaryotic ubiquitin-like protein Pup (72 aa).

Over residues 1–10 (MATRDSGGGQ) the composition is skewed to gly residues. The interval 1–41 (MATRDSGGGQQHTNRHADEVEEVAAEGNDASDLKERHEKLS) is disordered. The stretch at 21–61 (EEVAAEGNDASDLKERHEKLSEDVDSLLDEIDDVLEENAEE) forms a coiled coil. An ARC ATPase binding region spans residues 28 to 66 (NDASDLKERHEKLSEDVDSLLDEIDDVLEENAEEFVKGY). A compositionally biased stretch (basic and acidic residues) spans 31–41 (SDLKERHEKLS). Residue Glu72 forms an Isoglutamyl lysine isopeptide (Glu-Lys) (interchain with K-? in acceptor proteins) linkage.

It belongs to the prokaryotic ubiquitin-like protein family. In terms of assembly, strongly interacts with the proteasome-associated ATPase ARC through a hydrophobic interface; the interacting region of Pup lies in its C-terminal half. There is one Pup binding site per ARC hexamer ring.

Its pathway is protein degradation; proteasomal Pup-dependent pathway. Its function is as follows. Protein modifier that is covalently attached to lysine residues of substrate proteins, thereby targeting them for proteasomal degradation. The tagging system is termed pupylation. The chain is Prokaryotic ubiquitin-like protein Pup from Frankia alni (strain DSM 45986 / CECT 9034 / ACN14a).